Consider the following 425-residue polypeptide: Orexin/Hypocretin receptor type 1 (425 aa).

Residues 1-24 are disordered; that stretch reads MEPSATPGAQMGVPPGSREPSPVP. Topologically, residues 1 to 46 are extracellular; it reads MEPSATPGAQMGVPPGSREPSPVPPDYEDEFLRYLWRDYLYPKQYE. The tract at residues 26-41 is required for response to orexin-A; that stretch reads DYEDEFLRYLWRDYLY. The chain crosses the membrane as a helical span at residues 47 to 67; the sequence is WVLIAAYVAVFVVALVGNTLV. At 68-82 the chain is on the cytoplasmic side; sequence CLAVWRNHHMRTVTN. The chain crosses the membrane as a helical span at residues 83 to 105; sequence YFIVNLSLADVLVTAICLPASLL. Topologically, residues 106-119 are extracellular; that stretch reads VDITESWLFGHALC. C119 and C202 are oxidised to a cystine. The helical transmembrane segment at 120–140 threads the bilayer; that stretch reads KVIPYLQAVSVSVAVLTLSFI. Residues 141–160 lie on the Cytoplasmic side of the membrane; the sequence is ALDRWYAICHPLLFKSTARR. A helical transmembrane segment spans residues 161–182; it reads ARGSILGIWAVSLAIMVPQAAV. At 183 to 213 the chain is on the extracellular side; the sequence is MECSSVLPELANRTRLFSVCDERWADDLYPK. An N-linked (GlcNAc...) asparagine glycan is attached at N194. The helical transmembrane segment at 214–235 threads the bilayer; the sequence is IYHSCFFIVTYLAPLGLMAMAY. Over 236–298 the chain is Cytoplasmic; it reads FQIFRKLWGR…QMRARRKTAK (63 aa). The chain crosses the membrane as a helical span at residues 299 to 321; it reads MLMVVLLVFALCYLPISVLNVLK. N318 serves as a coordination point for suvorexant. Residues 322–336 lie on the Extracellular side of the membrane; sequence RVFGMFRQASDREAV. The helical transmembrane segment at 337 to 360 threads the bilayer; that stretch reads YACFTFSHWLVYANSAANPIIYNF. Residues 361–425 lie on the Cytoplasmic side of the membrane; it reads LSGKFREQFK…VLTSVTTVLP (65 aa).

It belongs to the G-protein coupled receptor 1 family.

Its subcellular location is the cell membrane. Moderately selective excitatory receptor for orexin-A and, with a lower affinity, for orexin-B neuropeptide. Triggers an increase in cytoplasmic Ca(2+) levels in response to orexin-A binding. This is Orexin/Hypocretin receptor type 1 from Homo sapiens (Human).